Consider the following 419-residue polypeptide: Acyl-coenzyme A thioesterase 1 (419 aa).

Residues Ser-232, Asp-324, and His-358 each act as charge relay system in the active site. At Ser-416 the chain carries Phosphoserine.

It belongs to the C/M/P thioester hydrolase family. In terms of assembly, monomer. In terms of tissue distribution, expressed in heart, kidney, brown adipose tissue, white adipose tissue, adrenal gland and muscle.

Its subcellular location is the cytoplasm. The protein localises to the cytosol. It carries out the reaction hexadecanoyl-CoA + H2O = hexadecanoate + CoA + H(+). The catalysed reaction is decanoyl-CoA + H2O = decanoate + CoA + H(+). The enzyme catalyses dodecanoyl-CoA + H2O = dodecanoate + CoA + H(+). It catalyses the reaction tetradecanoyl-CoA + H2O = tetradecanoate + CoA + H(+). It carries out the reaction octadecanoyl-CoA + H2O = octadecanoate + CoA + H(+). The catalysed reaction is eicosanoyl-CoA + H2O = eicosanoate + CoA + H(+). The enzyme catalyses (9Z)-octadecenoyl-CoA + H2O = (9Z)-octadecenoate + CoA + H(+). It catalyses the reaction (9Z)-hexadecenoyl-CoA + H2O = (9Z)-hexadecenoate + CoA + H(+). It carries out the reaction (9E)-octadecenoyl-CoA + H2O = (9E)-octadecenoate + CoA + H(+). It participates in lipid metabolism; fatty acid metabolism. In terms of biological role, catalyzes the hydrolysis of acyl-CoAs into free fatty acids and coenzyme A (CoASH), regulating their respective intracellular levels. More active towards saturated and unsaturated long chain fatty acyl-CoAs (C12-C20). This is Acyl-coenzyme A thioesterase 1 (Acot1) from Mus musculus (Mouse).